A 289-amino-acid chain; its full sequence is Oxaloacetate decarboxylase (289 aa).

Serine 47 contacts substrate. Residue aspartate 85 participates in Mg(2+) binding. The substrate site is built by arginine 156 and histidine 232.

It belongs to the isocitrate lyase/PEP mutase superfamily. Oxaloacetate decarboxylase family. Homotetramer; dimer of dimers. The cofactor is Mg(2+).

The enzyme catalyses oxaloacetate + H(+) = pyruvate + CO2. Catalyzes the decarboxylation of oxaloacetate into pyruvate. Seems to play a role in maintaining cellular concentrations of bicarbonate and pyruvate. The sequence is that of Oxaloacetate decarboxylase from Rhodopseudomonas palustris (strain BisB5).